The primary structure comprises 346 residues: [LysW]-lysine/[LysW]-ornithine hydrolase (346 aa).

A Zn(2+)-binding site is contributed by H68. Residue D70 is part of the active site. D92 is a binding site for Zn(2+). E122 (proton acceptor) is an active-site residue. Residues E123, E146, and H317 each coordinate Zn(2+).

The protein belongs to the peptidase M20A family. LysK subfamily. Requires Zn(2+) as cofactor. Co(2+) serves as cofactor.

It localises to the cytoplasm. It carries out the reaction [amino-group carrier protein]-C-terminal-gamma-(L-lysyl)-L-glutamate + H2O = [amino-group carrier protein]-C-terminal-L-glutamate + L-lysine. The enzyme catalyses [amino-group carrier protein]-C-terminal-gamma-(L-ornithyl)-L-glutamate + H2O = [amino-group carrier protein]-C-terminal-L-glutamate + L-ornithine. Its pathway is amino-acid biosynthesis; L-lysine biosynthesis via AAA pathway; L-lysine from L-alpha-aminoadipate (Thermus route): step 5/5. It participates in amino-acid biosynthesis; L-arginine biosynthesis. Catalyzes the release of L-lysine from [LysW]-gamma-L-lysine and the release of L-ornithine from [LysW]-L-ornithine. This chain is [LysW]-lysine/[LysW]-ornithine hydrolase, found in Saccharolobus islandicus (strain Y.N.15.51 / Yellowstone #2) (Sulfolobus islandicus).